Consider the following 206-residue polypeptide: Ribosomal RNA large subunit methyltransferase E (206 aa).

Glycine 60, tryptophan 62, aspartate 80, aspartate 96, and aspartate 121 together coordinate S-adenosyl-L-methionine. Lysine 161 serves as the catalytic Proton acceptor.

Belongs to the class I-like SAM-binding methyltransferase superfamily. RNA methyltransferase RlmE family.

The protein resides in the cytoplasm. It carries out the reaction uridine(2552) in 23S rRNA + S-adenosyl-L-methionine = 2'-O-methyluridine(2552) in 23S rRNA + S-adenosyl-L-homocysteine + H(+). Its function is as follows. Specifically methylates the uridine in position 2552 of 23S rRNA at the 2'-O position of the ribose in the fully assembled 50S ribosomal subunit. The polypeptide is Ribosomal RNA large subunit methyltransferase E (Francisella tularensis subsp. tularensis (strain FSC 198)).